The chain runs to 841 residues: Alpha-glucuronidase A (841 aa).

An N-terminal signal peptide occupies residues 1–20 (MRGSNLFQLTLALLLSLVAA). N-linked (GlcNAc...) asparagine glycans are attached at residues asparagine 51, asparagine 76, asparagine 149, asparagine 222, asparagine 279, asparagine 310, asparagine 343, asparagine 450, asparagine 465, asparagine 527, asparagine 576, asparagine 682, asparagine 723, and asparagine 732.

Belongs to the glycosyl hydrolase 67 family.

The protein localises to the secreted. It catalyses the reaction an alpha-D-glucuronoside + H2O = D-glucuronate + an alcohol. Its function is as follows. Alpha-glucuronidase involved in the hydrolysis of xylan, a major structural heterogeneous polysaccharide found in plant biomass representing the second most abundant polysaccharide in the biosphere, after cellulose. Releases 4-O-methylglucuronic acid from xylan. The chain is Alpha-glucuronidase A (aguA) from Aspergillus tubingensis.